We begin with the raw amino-acid sequence, 692 residues long: Elongation factor G 2 (692 aa).

The tr-type G domain maps to 8 to 283 (KDVRNIGIMA…GVVNYLPSPL (276 aa)). GTP contacts are provided by residues 17 to 24 (AHIDAGKT), 81 to 85 (DTPGH), and 135 to 138 (NKMD).

Belongs to the TRAFAC class translation factor GTPase superfamily. Classic translation factor GTPase family. EF-G/EF-2 subfamily.

The protein resides in the cytoplasm. Functionally, catalyzes the GTP-dependent ribosomal translocation step during translation elongation. During this step, the ribosome changes from the pre-translocational (PRE) to the post-translocational (POST) state as the newly formed A-site-bound peptidyl-tRNA and P-site-bound deacylated tRNA move to the P and E sites, respectively. Catalyzes the coordinated movement of the two tRNA molecules, the mRNA and conformational changes in the ribosome. The chain is Elongation factor G 2 from Desulfotalea psychrophila (strain LSv54 / DSM 12343).